The chain runs to 210 residues: MTGLFITLEGPEGAGKSTNREYLAERLRAAGIEVLLTREPGGTPLAERIRDVLLTPVEEVMNADTELLLVFAARAQHLATVIRPALERGAVVLCDRFTDSTYAYQGAGRGLSLARIAALEDFVQGELRPDLTLVFDLPVDVGLARASARGRLDRFEQEGQAFFQKVREAFLARAAAAPQRYVLVDAAQPLAQVQQSLDSLLPQLLERARG.

10-17 (GPEGAGKS) provides a ligand contact to ATP.

It belongs to the thymidylate kinase family.

It catalyses the reaction dTMP + ATP = dTDP + ADP. Its function is as follows. Phosphorylation of dTMP to form dTDP in both de novo and salvage pathways of dTTP synthesis. The chain is Thymidylate kinase from Pseudomonas fluorescens (strain ATCC BAA-477 / NRRL B-23932 / Pf-5).